Here is a 197-residue protein sequence, read N- to C-terminus: Large ribosomal subunit protein uL22 (197 aa).

The tract at residues 118-197 is disordered; sequence ESRPAKDQRS…ETSAAKGGSD (80 aa). Over residues 149-165 the composition is skewed to low complexity; that stretch reads APAKKAAAKAPAKKAPA. Basic residues predominate over residues 172–183; the sequence is TPAKKAPAKKAP. Residues 184 to 197 are compositionally biased toward low complexity; that stretch reads AKASETSAAKGGSD.

The protein belongs to the universal ribosomal protein uL22 family. In terms of assembly, part of the 50S ribosomal subunit.

This protein binds specifically to 23S rRNA; its binding is stimulated by other ribosomal proteins, e.g. L4, L17, and L20. It is important during the early stages of 50S assembly. It makes multiple contacts with different domains of the 23S rRNA in the assembled 50S subunit and ribosome. Functionally, the globular domain of the protein is located near the polypeptide exit tunnel on the outside of the subunit, while an extended beta-hairpin is found that lines the wall of the exit tunnel in the center of the 70S ribosome. This chain is Large ribosomal subunit protein uL22, found in Mycobacterium bovis (strain ATCC BAA-935 / AF2122/97).